Here is a 253-residue protein sequence, read N- to C-terminus: Imidazole glycerol phosphate synthase subunit HisF (253 aa).

Residues D11 and D130 contribute to the active site.

It belongs to the HisA/HisF family. Heterodimer of HisH and HisF.

The protein localises to the cytoplasm. It carries out the reaction 5-[(5-phospho-1-deoxy-D-ribulos-1-ylimino)methylamino]-1-(5-phospho-beta-D-ribosyl)imidazole-4-carboxamide + L-glutamine = D-erythro-1-(imidazol-4-yl)glycerol 3-phosphate + 5-amino-1-(5-phospho-beta-D-ribosyl)imidazole-4-carboxamide + L-glutamate + H(+). It functions in the pathway amino-acid biosynthesis; L-histidine biosynthesis; L-histidine from 5-phospho-alpha-D-ribose 1-diphosphate: step 5/9. IGPS catalyzes the conversion of PRFAR and glutamine to IGP, AICAR and glutamate. The HisF subunit catalyzes the cyclization activity that produces IGP and AICAR from PRFAR using the ammonia provided by the HisH subunit. The protein is Imidazole glycerol phosphate synthase subunit HisF of Ruegeria pomeroyi (strain ATCC 700808 / DSM 15171 / DSS-3) (Silicibacter pomeroyi).